Consider the following 572-residue polypeptide: Proline--tRNA ligase (572 aa).

It belongs to the class-II aminoacyl-tRNA synthetase family. ProS type 1 subfamily. Homodimer.

The protein resides in the cytoplasm. The catalysed reaction is tRNA(Pro) + L-proline + ATP = L-prolyl-tRNA(Pro) + AMP + diphosphate. Functionally, catalyzes the attachment of proline to tRNA(Pro) in a two-step reaction: proline is first activated by ATP to form Pro-AMP and then transferred to the acceptor end of tRNA(Pro). As ProRS can inadvertently accommodate and process non-cognate amino acids such as alanine and cysteine, to avoid such errors it has two additional distinct editing activities against alanine. One activity is designated as 'pretransfer' editing and involves the tRNA(Pro)-independent hydrolysis of activated Ala-AMP. The other activity is designated 'posttransfer' editing and involves deacylation of mischarged Ala-tRNA(Pro). The misacylated Cys-tRNA(Pro) is not edited by ProRS. This Citrobacter koseri (strain ATCC BAA-895 / CDC 4225-83 / SGSC4696) protein is Proline--tRNA ligase.